The following is a 549-amino-acid chain: Cation/acetate symporter ActP (549 aa).

Helical transmembrane passes span 33-53 (WQAI…TYWA), 77-97 (LAIA…ALVF), 103-123 (GLIY…LIAE), 148-168 (ILSA…QMVG), 183-203 (IAVV…GMLA), 206-226 (WVQI…AFMV), 262-282 (ISAL…PHIL), 303-323 (GFMG…IMLV), 355-375 (LFLG…VAGL), 404-424 (VSKI…FLFE), 428-448 (IAFM…PIIL), 464-484 (GGWL…TIWV), and 493-513 (IFPY…GIWF).

The protein belongs to the sodium:solute symporter (SSF) (TC 2.A.21) family.

The protein resides in the cell inner membrane. Functionally, transports acetate. This is Cation/acetate symporter ActP from Salmonella paratyphi C (strain RKS4594).